The primary structure comprises 123 residues: Protein Wnt-3b (123 aa).

Ser-1 is lipidated: O-palmitoleoyl serine; by PORCN. Cys-89 and Cys-104 are joined by a disulfide. A glycan (N-linked (GlcNAc...) asparagine) is linked at Asn-90.

This sequence belongs to the Wnt family. Post-translationally, palmitoleoylation is required for efficient binding to frizzled receptors. Depalmitoleoylation leads to Wnt signaling pathway inhibition.

The protein resides in the secreted. It localises to the extracellular space. Its subcellular location is the extracellular matrix. Its function is as follows. Ligand for members of the frizzled family of seven transmembrane receptors. Probable developmental protein. May be a signaling molecule which affects the development of discrete regions of tissues. Is likely to signal over only few cell diameters. The chain is Protein Wnt-3b (WNT-3B) from Alopias vulpinus (Common thresher shark).